The following is a 299-amino-acid chain: Probable lipid kinase YegS (299 aa).

The 132-residue stretch at 2–133 folds into the DAGKc domain; that stretch reads ANFPASLLIL…IDMARVNDKT (132 aa). Residues Thr40, 66–72, and Thr95 contribute to the ATP site; that span reads GDGTINE. Residues Leu215, Asp218, and Leu220 each coordinate Mg(2+). Glu271 acts as the Proton acceptor in catalysis.

It belongs to the diacylglycerol/lipid kinase family. YegS lipid kinase subfamily. It depends on Mg(2+) as a cofactor. Ca(2+) serves as cofactor.

The protein resides in the cytoplasm. Functionally, probably phosphorylates lipids; the in vivo substrate is unknown. The chain is Probable lipid kinase YegS from Salmonella newport (strain SL254).